A 221-amino-acid polypeptide reads, in one-letter code: Protein myomaker (221 aa).

Residues Met-1–Thr-3 lie on the Extracellular side of the membrane. The helical transmembrane segment at Leu-4–Ile-24 threads the bilayer. Residues Ala-25–Ala-34 lie on the Cytoplasmic side of the membrane. A helical membrane pass occupies residues Met-35–Leu-55. Over Ser-56 to Asp-64 the chain is Extracellular. Residues Ile-65 to Leu-85 traverse the membrane as a helical segment. Topologically, residues Ala-86 to Lys-92 are cytoplasmic. The chain crosses the membrane as a helical span at residues Arg-93–His-110. Residues Asp-111–Trp-113 are Extracellular-facing. The chain crosses the membrane as a helical span at residues Gly-114 to Leu-134. The Cytoplasmic portion of the chain corresponds to Gln-135–Gln-153. Residues Ile-154–Trp-174 form a helical membrane-spanning segment. Position 175 (Asp-175) is a topological domain, extracellular. A helical transmembrane segment spans residues Tyr-176 to Pro-196. At Lys-197–Val-221 the chain is on the cytoplasmic side. S-palmitoyl cysteine attachment occurs at residues Cys-217 and Cys-218.

It belongs to the TMEM8 family. Interacts with MYMX. Post-translationally, palmitoylated at the C-terminus; palmitoylation promotes localization to the Golgi apparatus.

The protein localises to the cell membrane. Its subcellular location is the golgi apparatus membrane. Functionally, myoblast-specific protein that mediates myoblast fusion, an essential step for the formation of multi-nucleated muscle fibers. Actively participates in the membrane fusion reaction by mediating the mixing of cell membrane lipids (hemifusion) upstream of MYMX. Acts independently of MYMX. Involved in skeletal muscle regeneration in response to injury by mediating the fusion of satellite cells, a population of muscle stem cells, with injured myofibers. Also involved in skeletal muscle hypertrophy, probably by mediating the fusion of satellite cells with myofibers. This is Protein myomaker from Homo sapiens (Human).